A 65-amino-acid chain; its full sequence is Putative beta-neurotoxin RjAa2 (65 aa).

The 64-residue stretch at 1–64 (KEGYPMGRDG…VWDSSTNKCG (64 aa)) folds into the LCN-type CS-alpha/beta domain. 4 disulfide bridges follow: Cys-11-Cys-63, Cys-15-Cys-37, Cys-22-Cys-44, and Cys-26-Cys-46.

This sequence belongs to the long (4 C-C) scorpion toxin superfamily. Sodium channel inhibitor family. Beta subfamily. Expressed by the venom gland.

It localises to the secreted. In terms of biological role, beta toxins bind voltage-independently at site-4 of sodium channels (Nav) and shift the voltage of activation toward more negative potentials thereby affecting sodium channel activation and promoting spontaneous and repetitive firing. The sequence is that of Putative beta-neurotoxin RjAa2 from Rhopalurus junceus (Caribbean blue scorpion).